A 74-amino-acid polypeptide reads, in one-letter code: Kappa-scoloptoxin(07)-Ssm2f (74 aa).

The first 19 residues, 1 to 19, serve as a signal peptide directing secretion; it reads MLVFYAILFVTVFSNTVMG. A propeptide spanning residues 20 to 41 is cleaved from the precursor; that stretch reads ATIDKPIPKPIFREAIEEMEVN.

This sequence belongs to the scoloptoxin-07 family. In terms of processing, contains 3 disulfide bonds. As to expression, expressed by the venom gland.

The protein localises to the secreted. Inhibits voltage-gated potassium channels. This is Kappa-scoloptoxin(07)-Ssm2f from Scolopendra mutilans (Chinese red-headed centipede).